The sequence spans 398 residues: KiSS-1 receptor (398 aa).

At 1–46 (MHTVATSGPNASWGAPANASGCPGCGANASDGPVPSPRAVDAWLVP) the chain is on the extracellular side. N-linked (GlcNAc...) asparagine glycosylation is found at Asn10, Asn18, and Asn28. A helical membrane pass occupies residues 47–67 (LFFAALMLLGLVGNSLVIYVI). Over 68–78 (CRHKPMRTVTN) the chain is Cytoplasmic. Residues 79-101 (FYIANLAATDVTFLLCCVPFTAL) traverse the membrane as a helical segment. The Extracellular portion of the chain corresponds to 102–120 (LYPLPGWVLGDFMCKFVNY). A disulfide bond links Cys115 and Cys191. The chain crosses the membrane as a helical span at residues 121–138 (IQQVSVQATCATLTAMSV). Residues 139–157 (DRWYVTVFPLRALHRRTPR) are Cytoplasmic-facing. A helical membrane pass occupies residues 158-178 (LALAVSLSIWVGSAAVSAPVL). Over 179 to 202 (ALHRLSPGPRAYCSEAFPSRALER) the chain is Extracellular. Residues 203-223 (AFALYNLLALYLLPLLATCAC) form a helical membrane-spanning segment. Over 224–263 (YAAMLRHLGRVAVRPAPADSALQGQVLAERAGAVRAKVSR) the chain is Cytoplasmic. The chain crosses the membrane as a helical span at residues 264–284 (LVAAVVLLFAACWGPIQLFLV). Residues 285–305 (LQALGPAGSWHPRSYAAYALK) are Extracellular-facing. A helical transmembrane segment spans residues 306–328 (TWAHCMSYSNSALNPLLYAFLGS). Over 329–398 (HFRQAFRRVC…CVLGEDNAPL (70 aa)) the chain is Cytoplasmic. Residues 341–363 (APRRPRRPRRPGPSDPAAPHAEL) form a disordered region.

The protein belongs to the G-protein coupled receptor 1 family. As to expression, most highly expressed in the pancreas, placenta and spinal cord, with lower-level of expression in peripheral blood leukocytes, kidney, lung, fetal liver, stomach, small intestine, testes, spleen, thymus, adrenal glands and lymph nodes. In the adult brain, expressed in the superior frontal gyrus, putamen, caudate nucleus, cingulate gyrus, nucleus accumbens, hippocampus, pons and amygdala, as well as the hypothalamus and pituitary. Expression levels are higher in early (7-9 weeks) than term placentas. Expression levels were increased in both early placentas and molar pregnancies and were reduced in choriocarcinoma cells. Expressed at higher levels in first trimester trophoblasts than at term of gestation. Also found in the extravillous trophoblast suggesting endocrine/paracrine activation mechanism.

The protein localises to the cell membrane. Functionally, receptor for metastin (kisspeptin-54 or kp-54), a C-terminally amidated peptide of KiSS1. KiSS1 is a metastasis suppressor protein that suppresses metastases in malignant melanomas and in some breast carcinomas without affecting tumorigenicity. The metastasis suppressor properties may be mediated in part by cell cycle arrest and induction of apoptosis in malignant cells. The receptor is essential for normal gonadotropin-released hormone physiology and for puberty. The hypothalamic KiSS1/KISS1R system is a pivotal factor in central regulation of the gonadotropic axis at puberty and in adulthood. The receptor is also probably involved in the regulation and fine-tuning of trophoblast invasion generated by the trophoblast itself. Analysis of the transduction pathways activated by the receptor identifies coupling to phospholipase C and intracellular calcium release through pertussis toxin-insensitive G(q) proteins. This Homo sapiens (Human) protein is KiSS-1 receptor (KISS1R).